Here is a 635-residue protein sequence, read N- to C-terminus: MIKITLKDGKVMEFEEGIKISDIAMKISPALYKKALAAKIDGETMDLMTELHKDSSLEILTFEDEMGKWALRHTGAHILAQAVKRLYPEVKLAIGPAIDTGFYYDFEADFTFTPEILEKIEAEIKKIIKENHKLERFELPREEAINLMKENNEDYKVELIEDLPEGEVISFYKQGDFTDLCAGPHVPSTGKVKSVKLLSLAGAYWRGNENNKMLQRIYGTAFTKKSELDEYLNMLEEAKKRDHRKLGKELDLFSIHEEGPGFPFFHPKGMIVRNILESFWREEHTKAGYQEIRTPLILNEALWHQSGHWDHYKENMYFTNIDDGDYAIKPMNCPGGILVYKNSMHSYRDLPLRLSELGIVHRHELSGALHGLMRVRCFTQDDAHLYMTKEQIKEEVVGIIKLIDKFYKLFGFEYFVELSTRPEDSMGSDEDWEIATNGLKEALDSIGKEYRVNEGDGAFYGPKIDFHLKDCIGRTWQCGTIQLDFQMPERFDLSYIGADGEKHRPVMVHRTIYGSVERFIGILIEQYAGAFPTWLAPVQVKLMNITDAQYDYLKKVEETLKENNIRVEIDTRNEKIGYKIREAQLQKVPYMLILGDKEVEAGKVAVRSRKDGDLGAISLEEFIEKIKNEIKAKTN.

The 61-residue stretch at 1 to 61 (MIKITLKDGK…HKDSSLEILT (61 aa)) folds into the TGS domain. Residues 242–532 (DHRKLGKELD…LIEQYAGAFP (291 aa)) form a catalytic region. Residues Cys333, His384, and His509 each coordinate Zn(2+).

Belongs to the class-II aminoacyl-tRNA synthetase family. Homodimer. It depends on Zn(2+) as a cofactor.

The protein localises to the cytoplasm. The catalysed reaction is tRNA(Thr) + L-threonine + ATP = L-threonyl-tRNA(Thr) + AMP + diphosphate + H(+). Functionally, catalyzes the attachment of threonine to tRNA(Thr) in a two-step reaction: L-threonine is first activated by ATP to form Thr-AMP and then transferred to the acceptor end of tRNA(Thr). Also edits incorrectly charged L-seryl-tRNA(Thr). This chain is Threonine--tRNA ligase, found in Clostridium botulinum (strain Okra / Type B1).